A 317-amino-acid polypeptide reads, in one-letter code: L-lactate dehydrogenase (317 aa).

NAD(+) contacts are provided by residues valine 17, aspartate 38, lysine 43, tyrosine 69, and 83–84; that span reads GA. Substrate contacts are provided by glutamine 86 and arginine 92. NAD(+)-binding positions include serine 105, 122 to 124, and serine 147; that span reads ATN. 124–127 provides a ligand contact to substrate; sequence NPVD. Position 152–155 (152–155) interacts with substrate; it reads DSAR. Beta-D-fructose 1,6-bisphosphate-binding residues include arginine 157 and histidine 172. Catalysis depends on histidine 179, which acts as the Proton acceptor. Position 224 is a phosphotyrosine (tyrosine 224). Residue threonine 233 participates in substrate binding.

The protein belongs to the LDH/MDH superfamily. LDH family. In terms of assembly, homotetramer.

Its subcellular location is the cytoplasm. The catalysed reaction is (S)-lactate + NAD(+) = pyruvate + NADH + H(+). Its pathway is fermentation; pyruvate fermentation to lactate; (S)-lactate from pyruvate: step 1/1. With respect to regulation, allosterically activated by fructose 1,6-bisphosphate (FBP). Functionally, catalyzes the conversion of lactate to pyruvate. The protein is L-lactate dehydrogenase of Bacillus velezensis (strain DSM 23117 / BGSC 10A6 / LMG 26770 / FZB42) (Bacillus amyloliquefaciens subsp. plantarum).